A 941-amino-acid polypeptide reads, in one-letter code: Isoleucine--tRNA ligase (941 aa).

Positions 58–68 (PYANGDIHIGH) match the 'HIGH' region motif. L-isoleucyl-5'-AMP is bound at residue E562. A 'KMSKS' region motif is present at residues 603 to 607 (KMSKS). Residue K606 coordinates ATP. Zn(2+) contacts are provided by C904, C907, C924, and C927.

It belongs to the class-I aminoacyl-tRNA synthetase family. IleS type 1 subfamily. Monomer. Zn(2+) serves as cofactor.

Its subcellular location is the cytoplasm. The catalysed reaction is tRNA(Ile) + L-isoleucine + ATP = L-isoleucyl-tRNA(Ile) + AMP + diphosphate. Catalyzes the attachment of isoleucine to tRNA(Ile). As IleRS can inadvertently accommodate and process structurally similar amino acids such as valine, to avoid such errors it has two additional distinct tRNA(Ile)-dependent editing activities. One activity is designated as 'pretransfer' editing and involves the hydrolysis of activated Val-AMP. The other activity is designated 'posttransfer' editing and involves deacylation of mischarged Val-tRNA(Ile). This Alkalilimnicola ehrlichii (strain ATCC BAA-1101 / DSM 17681 / MLHE-1) protein is Isoleucine--tRNA ligase.